A 213-amino-acid polypeptide reads, in one-letter code: 5-methylthioribulose-1-phosphate/5-deoxyribulose-1-phosphate aldolase (213 aa).

Catalysis depends on E73, which acts as the Proton donor/acceptor. Residues E73, H92, H94, and H155 each contribute to the Co(2+) site.

This sequence belongs to the aldolase class II family. It depends on Co(2+) as a cofactor.

The catalysed reaction is 5-(methylsulfanyl)-D-ribulose 1-phosphate = 2-(methylsulfanyl)acetaldehyde + dihydroxyacetone phosphate. The enzyme catalyses 5-deoxy-D-ribulose 1-phosphate = dihydroxyacetone phosphate + acetaldehyde. The protein operates within amino-acid biosynthesis; L-methionine biosynthesis via salvage pathway. In terms of biological role, uses 5-methylthioribulose-1-phosphate to yield 2-(methylthio)acetaldehyde and dihydroxyacetone phosphate. Can also use 5-deoxyribulose 1-phosphate to yield acetaldehyde and dihydroxyacetone phosphate. Part of a bifunctional DHAP-shunt salvage pathway for SAM by-products. This chain is 5-methylthioribulose-1-phosphate/5-deoxyribulose-1-phosphate aldolase, found in Escherichia coli O45:K1 (strain S88 / ExPEC).